Here is a 360-residue protein sequence, read N- to C-terminus: Photosystem II protein D1 3 (360 aa).

3 helical membrane passes run 29 to 46, 118 to 133, and 142 to 156; these read YVGW…TATI, HFLL…QWEL, and WICV…AAFA. Residue His-118 coordinates chlorophyll a. Residue Tyr-126 coordinates pheophytin a. [CaMn4O5] cluster-binding residues include Asp-170 and Glu-189. The helical transmembrane segment at 197 to 218 threads the bilayer; that stretch reads FHMLGVAGVFGGSLFSAMHGSL. Chlorophyll a is bound at residue His-198. A quinone contacts are provided by residues His-215 and 264–265; that span reads SF. His-215 is a Fe cation binding site. Residue His-272 participates in Fe cation binding. A helical membrane pass occupies residues 274–288; sequence FLGAWPVVGIWFTSM. [CaMn4O5] cluster-binding residues include His-332, Glu-333, Asp-342, and Ala-344. Residues 345–360 constitute a propeptide that is removed on maturation; it reads AGEATPVALTAPSIHG.

Belongs to the reaction center PufL/M/PsbA/D family. PSII is composed of 1 copy each of membrane proteins PsbA, PsbB, PsbC, PsbD, PsbE, PsbF, PsbH, PsbI, PsbJ, PsbK, PsbL, PsbM, PsbT, PsbX, PsbY, PsbZ, Psb30/Ycf12, peripheral proteins PsbO, CyanoQ (PsbQ), PsbU, PsbV and a large number of cofactors. It forms dimeric complexes. The D1/D2 heterodimer binds P680, chlorophylls that are the primary electron donor of PSII, and subsequent electron acceptors. It shares a non-heme iron and each subunit binds pheophytin, quinone, additional chlorophylls, carotenoids and lipids. D1 provides most of the ligands for the Mn4-Ca-O5 cluster of the oxygen-evolving complex (OEC). There is also a Cl(-1) ion associated with D1 and D2, which is required for oxygen evolution. The PSII complex binds additional chlorophylls, carotenoids and specific lipids. serves as cofactor. Tyr-161 forms a radical intermediate that is referred to as redox-active TyrZ, YZ or Y-Z. In terms of processing, C-terminally processed by CtpA; processing is essential to allow assembly of the oxygen-evolving complex and thus photosynthetic growth.

It localises to the cellular thylakoid membrane. It carries out the reaction 2 a plastoquinone + 4 hnu + 2 H2O = 2 a plastoquinol + O2. Its function is as follows. Photosystem II (PSII) is a light-driven water:plastoquinone oxidoreductase that uses light energy to abstract electrons from H(2)O, generating O(2) and a proton gradient subsequently used for ATP formation. It consists of a core antenna complex that captures photons, and an electron transfer chain that converts photonic excitation into a charge separation. The D1/D2 (PsbA/PsbD) reaction center heterodimer binds P680, the primary electron donor of PSII as well as several subsequent electron acceptors. In Synechococcus sp. (strain ATCC 27144 / PCC 6301 / SAUG 1402/1) (Anacystis nidulans), this protein is Photosystem II protein D1 3.